Here is a 181-residue protein sequence, read N- to C-terminus: MEKLIESLSDAPIIDKDGYEYLVHPISNGVPMLDPDLLREVVVEVMQTADLDVDKIVAPEAMGIHLATALSLQTDIPLVVIRKRPYGLEGEVSLHQQTGYSESEMYINDVEEGDRVLIVDDMLSTGGTLAAICTALDDIGAEIVDIVVVLRKVGDSALDDTKFDATSLLDITVEDGDVTVH.

The protein belongs to the purine/pyrimidine phosphoribosyltransferase family. Archaeal HPRT subfamily.

Its function is as follows. May catalyze a purine salvage reaction, the substrate is unknown. This Haloterrigena turkmenica (strain ATCC 51198 / DSM 5511 / JCM 9101 / NCIMB 13204 / VKM B-1734 / 4k) (Halococcus turkmenicus) protein is HGPRTase-like protein 2.